The sequence spans 453 residues: MSNEVSIKELIEKAKVAQKKLEAYSQEQVDVLVKALGKVVYDNAEMFAKEAVEETEMGVYEDKVAKCHLKSGAIWNHIKDKKTVGIIKEEPERALVYVAKPKGVVAATTPITNPVVTPMCNAMAAIKGRNTIIVAPHPKAKKVSAHTVELMNAELKKLGAPENIIQIVEAPSREAAKELMESADVVIATGGAGRVKAAYSSGRPAYGVGPGNSQVIVDKGYDYNKAAQDIITGRKYDNGIICSSEQSVIAPAEDYDKVIAAFVENGAFYVEDEETVEKFRSTLFKDGKINSKIIGKSVQIIADLAGVKVPEGTKVIVLKGKGAGEKDVLCKEKMCPVLVALKYDTFEEAVEIAMANYMYEGAGHTAGIHSDNDENIRYAGTVLPISRLVVNQPATTAGGSFNNGFNPTTTLGCGSWGRNSISENLTYEHLINVSRIGYFNKEAKVPSYEEIWG.

188–193 (ATGGAG) provides a ligand contact to NADP(+). Residue Cys242 is part of the active site.

As to quaternary structure, homodimer.

The enzyme catalyses succinate semialdehyde + NADP(+) + CoA = succinyl-CoA + NADPH + H(+). In terms of biological role, catalyzes the reduction of succinate semialdehyde to succinyl-CoA. The enzyme is specific for succinate semialdehyde and succinyl-CoA, and only shows low activity with palmitoyl-CoA. There is no activity with NAD(+) as cosubstrate. The sequence is that of Succinate-semialdehyde dehydrogenase (acetylating) (sucD) from Clostridium kluyveri (strain ATCC 8527 / DSM 555 / NBRC 12016 / NCIMB 10680 / K1).